A 254-amino-acid chain; its full sequence is Small ribosomal subunit protein uS2 (254 aa).

Residues 228–248 (RKERKGQDAEEELKKASEPKA) are compositionally biased toward basic and acidic residues. Residues 228–254 (RKERKGQDAEEELKKASEPKAAEAAAE) are disordered.

Belongs to the universal ribosomal protein uS2 family.

In Nitratidesulfovibrio vulgaris (strain ATCC 29579 / DSM 644 / CCUG 34227 / NCIMB 8303 / VKM B-1760 / Hildenborough) (Desulfovibrio vulgaris), this protein is Small ribosomal subunit protein uS2.